The chain runs to 34 residues: MEVNILAFSATALLILFPTALLLILYVKTVSQNN.

Residues Ile-5–Leu-25 form a helical membrane-spanning segment.

It belongs to the PsbM family. As to quaternary structure, PSII is composed of 1 copy each of membrane proteins PsbA, PsbB, PsbC, PsbD, PsbE, PsbF, PsbH, PsbI, PsbJ, PsbK, PsbL, PsbM, PsbT, PsbX, PsbY, PsbZ, Psb30/Ycf12, at least 3 peripheral proteins of the oxygen-evolving complex and a large number of cofactors. It forms dimeric complexes.

It is found in the plastid membrane. One of the components of the core complex of photosystem II (PSII). PSII is a light-driven water:plastoquinone oxidoreductase that uses light energy to abstract electrons from H(2)O, generating O(2) and a proton gradient subsequently used for ATP formation. It consists of a core antenna complex that captures photons, and an electron transfer chain that converts photonic excitation into a charge separation. This subunit is found at the monomer-monomer interface. The chain is Photosystem II reaction center protein M from Cuscuta gronovii (Common dodder).